A 243-amino-acid chain; its full sequence is uncharacterized protein (243 aa).

[4Fe-4S] cluster-binding residues include cysteine 120 and cysteine 157.

In terms of assembly, homodimer. [4Fe-4S] cluster serves as cofactor.

This is an uncharacterized protein from Methanocaldococcus jannaschii (strain ATCC 43067 / DSM 2661 / JAL-1 / JCM 10045 / NBRC 100440) (Methanococcus jannaschii).